The sequence spans 357 residues: DNA replication and repair protein RecF (357 aa).

Residue 30-37 (GANGSGKT) participates in ATP binding.

Belongs to the RecF family.

Its subcellular location is the cytoplasm. In terms of biological role, the RecF protein is involved in DNA metabolism; it is required for DNA replication and normal SOS inducibility. RecF binds preferentially to single-stranded, linear DNA. It also seems to bind ATP. This is DNA replication and repair protein RecF from Shigella flexneri serotype 5b (strain 8401).